A 511-amino-acid polypeptide reads, in one-letter code: UPF0288 protein MK0796 (511 aa).

The protein belongs to the UPF0288 family.

This chain is UPF0288 protein MK0796, found in Methanopyrus kandleri (strain AV19 / DSM 6324 / JCM 9639 / NBRC 100938).